A 559-amino-acid polypeptide reads, in one-letter code: MAAQGFLLLASYLLVLLVLARPLGTCLARMMNDIPLPGLAGVERVLWRVAGIRAEEMGWLQYLLAILLFNALGGLALFALLMLQGVLPFNPQHLPGLSWDLALNTAVSFVSNTNWQAYAGESTMSYLSQMVGLTVQNFLSAATGIAVVFALTRAFARQKMSALGNAWVDLTRITLWLLLPLSLLVALFFIQQGVPQNLLAYQPFTTLEGAHQLLPMGPVASQEAIKLLGTNGGGFFNANSAHPFENPTALTNLVQMLAIFLIPAALCFAFGEVVSDRRQGRAILWAMTLIFILCVAVVMWAETRGNPHLLTLGADSSLNMEGKESRFGILASSLFAVITTAASCGAVNAMHDSFTALGGMVPMWLMQIGEVVFGGVGSGLYGMLLFVMLAVFIAGLMVGRTPEYLGKKIDVREMKMIALAILVTPTLVLLGTALAMMTDAGRAGMFNPGPHGFSEVLYAVTSAANNNGSAFAGLGAATPFWNLLLAFCMLVGRFAVIIPVMAIAGSLVAKKIQPASPGTLATHDALFIGLLIGTVLLVGALTFIPALALGPLAEHFSLL.

Transmembrane regions (helical) follow at residues 5-25 (GFLL…PLGT), 63-83 (LLAI…LLML), 131-151 (VGLT…VFAL), 173-193 (ITLW…IQQG), 254-274 (VQML…GEVV), 282-302 (AILW…MWAE), 327-347 (FGIL…CGAV), 356-376 (ALGG…FGGV), 379-399 (GLYG…LMVG), 416-436 (MIAL…ALAM), 483-503 (LLLA…VMAI), and 525-545 (ALFI…TFIP).

It belongs to the KdpA family. In terms of assembly, the system is composed of three essential subunits: KdpA, KdpB and KdpC.

The protein localises to the cell inner membrane. In terms of biological role, part of the high-affinity ATP-driven potassium transport (or Kdp) system, which catalyzes the hydrolysis of ATP coupled with the electrogenic transport of potassium into the cytoplasm. This subunit binds the periplasmic potassium ions and delivers the ions to the membrane domain of KdpB through an intramembrane tunnel. This Klebsiella pneumoniae (strain 342) protein is Potassium-transporting ATPase potassium-binding subunit.